A 77-amino-acid chain; its full sequence is Acyl carrier protein (77 aa).

The Carrier domain maps to 1-76; the sequence is MENFDKVKDI…DAVKYINSLE (76 aa). Ser36 is subject to O-(pantetheine 4'-phosphoryl)serine.

The protein belongs to the acyl carrier protein (ACP) family. Post-translationally, 4'-phosphopantetheine is transferred from CoA to a specific serine of apo-ACP by AcpS. This modification is essential for activity because fatty acids are bound in thioester linkage to the sulfhydryl of the prosthetic group.

It is found in the cytoplasm. The protein operates within lipid metabolism; fatty acid biosynthesis. In terms of biological role, carrier of the growing fatty acid chain in fatty acid biosynthesis. In Staphylococcus epidermidis (strain ATCC 12228 / FDA PCI 1200), this protein is Acyl carrier protein.